The following is a 112-amino-acid chain: Ig kappa chain V-III region TEPC 124 (112 aa).

A framework-1 region spans residues Asp-1–Cys-23. A disulfide bridge links Cys-23 with Cys-92. Residues Arg-24–Glx-38 are complementarity-determining-1. The segment at Trp-39–Tyr-53 is framework-2. A complementarity-determining-2 region spans residues Arg-54–Ser-60. The segment at Gly-61 to Cys-92 is framework-3. The complementarity-determining-3 stretch occupies residues Glx-93 to Thr-101. Positions Phe-102 to Lys-111 are framework-4.

The polypeptide is Ig kappa chain V-III region TEPC 124 (Mus musculus (Mouse)).